A 1778-amino-acid polypeptide reads, in one-letter code: Protein TIC 214 (1778 aa).

6 helical membrane-spanning segments follow: residues Ile-18 to Gly-38, Phe-67 to Leu-87, Pro-90 to Asn-110, Val-132 to Leu-152, Val-175 to Ile-195, and Ile-226 to Ile-246. Positions Gly-1498 to Glu-1520 are disordered.

It belongs to the TIC214 family. Part of the Tic complex.

It localises to the plastid. Its subcellular location is the chloroplast inner membrane. Its function is as follows. Involved in protein precursor import into chloroplasts. May be part of an intermediate translocation complex acting as a protein-conducting channel at the inner envelope. This is Protein TIC 214 from Arabis hirsuta (Hairy rock-cress).